A 151-amino-acid chain; its full sequence is Protein PLANT CADMIUM RESISTANCE 1 (151 aa).

The next 2 helical transmembrane spans lie at 31–47 (ITLC…AEIV) and 54–71 (CCAA…TSCG).

It belongs to the cornifelin family. Homopentamer. Expressed in aerial part, but not in roots. Detected in the guard and mesophyll cells.

It localises to the cell membrane. Involved in glutathione-independent cadmium resistance. Reduces cadmium uptake rather than activating efflux, but is not closely coupled to calcium transporter. This Arabidopsis thaliana (Mouse-ear cress) protein is Protein PLANT CADMIUM RESISTANCE 1 (PCR1).